The following is a 350-amino-acid chain: uncharacterized protein (350 aa).

The interval 330–350 is disordered; it reads RHPGDLRSEPHYRPSAKLAEF. Basic and acidic residues predominate over residues 331–341; the sequence is HPGDLRSEPHY.

This is an uncharacterized protein from Mycobacterium tuberculosis.